Here is a 159-residue protein sequence, read N- to C-terminus: Ribosomal RNA large subunit methyltransferase H (159 aa).

S-adenosyl-L-methionine contacts are provided by residues Leu76, Gly108, and 127–132 (FSRMTF).

This sequence belongs to the RNA methyltransferase RlmH family. Homodimer.

It localises to the cytoplasm. The catalysed reaction is pseudouridine(1915) in 23S rRNA + S-adenosyl-L-methionine = N(3)-methylpseudouridine(1915) in 23S rRNA + S-adenosyl-L-homocysteine + H(+). Functionally, specifically methylates the pseudouridine at position 1915 (m3Psi1915) in 23S rRNA. The chain is Ribosomal RNA large subunit methyltransferase H from Clostridioides difficile (strain 630) (Peptoclostridium difficile).